The sequence spans 546 residues: Chaperonin GroEL 1 (546 aa).

ATP-binding positions include 29 to 32 (TLGP), 86 to 90 (DGTTT), Gly-414, and Asp-499.

It belongs to the chaperonin (HSP60) family. As to quaternary structure, forms a cylinder of 14 subunits composed of two heptameric rings stacked back-to-back. Interacts with the co-chaperonin GroES.

It is found in the cytoplasm. The enzyme catalyses ATP + H2O + a folded polypeptide = ADP + phosphate + an unfolded polypeptide.. Together with its co-chaperonin GroES, plays an essential role in assisting protein folding. The GroEL-GroES system forms a nano-cage that allows encapsulation of the non-native substrate proteins and provides a physical environment optimized to promote and accelerate protein folding. The polypeptide is Chaperonin GroEL 1 (Roseiflexus sp. (strain RS-1)).